The chain runs to 953 residues: Isoleucine--tRNA ligase (953 aa).

The 'HIGH' region motif lies at 57 to 67 (PYANGDIHIGH). Glu582 contacts L-isoleucyl-5'-AMP. Residues 623–627 (KMSKS) carry the 'KMSKS' region motif. Lys626 provides a ligand contact to ATP. Positions 916, 919, 936, and 939 each coordinate Zn(2+).

Belongs to the class-I aminoacyl-tRNA synthetase family. IleS type 1 subfamily. Monomer. Zn(2+) is required as a cofactor.

The protein resides in the cytoplasm. The enzyme catalyses tRNA(Ile) + L-isoleucine + ATP = L-isoleucyl-tRNA(Ile) + AMP + diphosphate. In terms of biological role, catalyzes the attachment of isoleucine to tRNA(Ile). As IleRS can inadvertently accommodate and process structurally similar amino acids such as valine, to avoid such errors it has two additional distinct tRNA(Ile)-dependent editing activities. One activity is designated as 'pretransfer' editing and involves the hydrolysis of activated Val-AMP. The other activity is designated 'posttransfer' editing and involves deacylation of mischarged Val-tRNA(Ile). The chain is Isoleucine--tRNA ligase from Bordetella parapertussis (strain 12822 / ATCC BAA-587 / NCTC 13253).